Here is a 273-residue protein sequence, read N- to C-terminus: Shikimate dehydrogenase (NADP(+)) (273 aa).

Shikimate contacts are provided by residues 15–17 (SKS) and Thr-62. The active-site Proton acceptor is Lys-66. NADP(+) is bound at residue Glu-78. The shikimate site is built by Asn-87 and Asp-103. Residues 127 to 131 (GAGGA), 150 to 155 (NRTQEK), and Met-213 each bind NADP(+). Shikimate is bound at residue Tyr-215. Gly-237 contributes to the NADP(+) binding site.

It belongs to the shikimate dehydrogenase family. As to quaternary structure, homodimer.

It carries out the reaction shikimate + NADP(+) = 3-dehydroshikimate + NADPH + H(+). It functions in the pathway metabolic intermediate biosynthesis; chorismate biosynthesis; chorismate from D-erythrose 4-phosphate and phosphoenolpyruvate: step 4/7. Its function is as follows. Involved in the biosynthesis of the chorismate, which leads to the biosynthesis of aromatic amino acids. Catalyzes the reversible NADPH linked reduction of 3-dehydroshikimate (DHSA) to yield shikimate (SA). The sequence is that of Shikimate dehydrogenase (NADP(+)) from Shewanella woodyi (strain ATCC 51908 / MS32).